The following is a 131-amino-acid chain: Fumarate reductase subunit C (131 aa).

The next 3 helical transmembrane spans lie at 30–50 (EGTA…LFAL), 61–81 (IGFL…AAAL), and 110–130 (IKGL…VALF).

The protein belongs to the FrdC family. In terms of assembly, part of an enzyme complex containing four subunits: a flavoprotein (FrdA), an iron-sulfur protein (FrdB), and two hydrophobic anchor proteins (FrdC and FrdD).

Its subcellular location is the cell inner membrane. Functionally, two distinct, membrane-bound, FAD-containing enzymes are responsible for the catalysis of fumarate and succinate interconversion; fumarate reductase is used in anaerobic growth, and succinate dehydrogenase is used in aerobic growth. Anchors the catalytic components of the fumarate reductase complex to the cell inner membrane, binds quinones. This Klebsiella pneumoniae subsp. pneumoniae (strain ATCC 700721 / MGH 78578) protein is Fumarate reductase subunit C.